The primary structure comprises 144 residues: MKVLVVNGPNLNMLGKRDKNIYGNFSHEDLVKMIEDWGRKNGVEVEVFQSNHEGKILDRLHRLDFDGLVINPGAFTHYSYAIRDALEIVKVPKVEVHISNIHRREEFRRRSVTAEVCDGQISGLGVYGYLLALEYIKKKLEELT.

Catalysis depends on Tyr-22, which acts as the Proton acceptor. Positions 71, 77, and 84 each coordinate substrate. His-97 functions as the Proton donor in the catalytic mechanism. Substrate-binding positions include 98–99 (IS) and Arg-108.

Belongs to the type-II 3-dehydroquinase family. In terms of assembly, homododecamer.

It carries out the reaction 3-dehydroquinate = 3-dehydroshikimate + H2O. The protein operates within metabolic intermediate biosynthesis; chorismate biosynthesis; chorismate from D-erythrose 4-phosphate and phosphoenolpyruvate: step 3/7. Its function is as follows. Catalyzes a trans-dehydration via an enolate intermediate. The polypeptide is 3-dehydroquinate dehydratase (aroQ) (Thermotoga maritima (strain ATCC 43589 / DSM 3109 / JCM 10099 / NBRC 100826 / MSB8)).